Reading from the N-terminus, the 244-residue chain is Membrane-spanning 4-domains subfamily A member 6B (244 aa).

The Cytoplasmic portion of the chain corresponds to 1-46; the sequence is MIPQVVTSETVAMISPNGMSLPQTDKPQPFHQWQDSLKKHLKAEIK. Residues 47 to 67 form a helical membrane-spanning segment; it reads VMAAIQIMCAVMVLSLGIILA. At 68–84 the chain is on the extracellular side; the sequence is SVPSNLHFTSVFSVLLK. Residues 85-105 form a helical membrane-spanning segment; sequence SGYPFIGALFFIVSGILSIVT. At 106–121 the chain is on the cytoplasmic side; the sequence is ETKSTKILVDSSLTLN. A helical membrane pass occupies residues 122-142; it reads ILSVSFAFMGIIIISVSLAGL. Residues 143–176 are Extracellular-facing; the sequence is HPASEQCLQSKELRPTEYHYYQFLDRNECFAAKS. A helical membrane pass occupies residues 177-197; that stretch reads VLAGVFSLMLISTMLELGLAV. Topologically, residues 198-244 are cytoplasmic; the sequence is LTAMLWWKQSHSNIPGNVMFLPHSSNNDSNMESKVLCNPSYEEQLVC.

It belongs to the MS4A family. Expressed at high levels in thymus, spleen, and peripheral lymph nodes, with less abundant levels in non-lymphoid tissues.

The protein resides in the membrane. Its function is as follows. May be involved in signal transduction as a component of a multimeric receptor complex. This chain is Membrane-spanning 4-domains subfamily A member 6B (Ms4a6b), found in Mus musculus (Mouse).